Here is a 172-residue protein sequence, read N- to C-terminus: Bifunctional protein PyrR (172 aa).

Positions 93–105 match the PRPP-binding motif; that stretch reads VILIDDVLYTGRT.

Belongs to the purine/pyrimidine phosphoribosyltransferase family. PyrR subfamily. In terms of assembly, homodimer and homohexamer; in equilibrium.

It carries out the reaction UMP + diphosphate = 5-phospho-alpha-D-ribose 1-diphosphate + uracil. Regulates transcriptional attenuation of the pyrimidine nucleotide (pyr) operon by binding in a uridine-dependent manner to specific sites on pyr mRNA. This disrupts an antiterminator hairpin in the RNA and favors formation of a downstream transcription terminator, leading to a reduced expression of downstream genes. Functionally, also displays a weak uracil phosphoribosyltransferase activity which is not physiologically significant. This Streptococcus sanguinis (strain SK36) protein is Bifunctional protein PyrR.